The sequence spans 87 residues: MKTKLNELLEFPTPFTYKVMGQALPELVDQVVEVVQRHAPGDYTPTVKPSSKGNYHSVSITINATHIEQVETLYEELGKIDIVRMVL.

It belongs to the UPF0250 family.

The sequence is that of UPF0250 protein YbeD from Shigella boydii serotype 18 (strain CDC 3083-94 / BS512).